The following is a 354-amino-acid chain: MRVLGIESSCDETGVALVEVRGSVLPVLLADALYSQIEMHQAYGGVVPELASRDHIRRVLPLTEQVLAASGRTLADIDVVAFTRGPGLAGALLVGAGVACALGAALGKPVLGVHHLEGHLLSPFLSADPPEFPFVALLVSGGHTQLMRVDGVGRYELLGETIDDAAGEAFDKSAKLLGLAYPGGPALSRLAEQGDATAFKLPRPLLKSGNLDFSFAGLKTAVMVQAKKLAAAQDGSVEALPVQVLADLAASTQAAIVEVLVKKSMTALSQTSLKRLVVAGGVGANRSLRAQLNAECGKRGVRVHYPELHLCTDNGAMIAMAAAMRLQSGQQAASEVYAFDVRPRWPLGDLTASA.

Fe cation-binding residues include histidine 115 and histidine 119. Substrate is bound by residues 138 to 142, aspartate 171, glycine 184, and asparagine 285; that span reads LVSGG. A Fe cation-binding site is contributed by aspartate 313.

The protein belongs to the KAE1 / TsaD family. It depends on Fe(2+) as a cofactor.

It is found in the cytoplasm. It carries out the reaction L-threonylcarbamoyladenylate + adenosine(37) in tRNA = N(6)-L-threonylcarbamoyladenosine(37) in tRNA + AMP + H(+). Functionally, required for the formation of a threonylcarbamoyl group on adenosine at position 37 (t(6)A37) in tRNAs that read codons beginning with adenine. Is involved in the transfer of the threonylcarbamoyl moiety of threonylcarbamoyl-AMP (TC-AMP) to the N6 group of A37, together with TsaE and TsaB. TsaD likely plays a direct catalytic role in this reaction. This chain is tRNA N6-adenosine threonylcarbamoyltransferase, found in Albidiferax ferrireducens (strain ATCC BAA-621 / DSM 15236 / T118) (Rhodoferax ferrireducens).